Reading from the N-terminus, the 376-residue chain is DNA replication and repair protein RecF (376 aa).

35-42 (GDNGSGKT) provides a ligand contact to ATP.

This sequence belongs to the RecF family.

It localises to the cytoplasm. In terms of biological role, the RecF protein is involved in DNA metabolism; it is required for DNA replication and normal SOS inducibility. RecF binds preferentially to single-stranded, linear DNA. It also seems to bind ATP. This chain is DNA replication and repair protein RecF, found in Agrobacterium fabrum (strain C58 / ATCC 33970) (Agrobacterium tumefaciens (strain C58)).